Reading from the N-terminus, the 563-residue chain is Ataxin-10 homolog (563 aa).

A Phosphothreonine modification is found at T433. The disordered stretch occupies residues 544–563 (VSKEEDPGNENSEIISIDED). The residue at position 559 (S559) is a Phosphoserine.

This sequence belongs to the ataxin-10 family.

The protein localises to the cytoplasm. Functionally, may play a role in the regulation of cytokinesis. This Saccharomyces cerevisiae (strain ATCC 204508 / S288c) (Baker's yeast) protein is Ataxin-10 homolog (CTR86).